The primary structure comprises 571 residues: Proline--tRNA ligase (571 aa).

This sequence belongs to the class-II aminoacyl-tRNA synthetase family. ProS type 1 subfamily. As to quaternary structure, homodimer.

The protein resides in the cytoplasm. It carries out the reaction tRNA(Pro) + L-proline + ATP = L-prolyl-tRNA(Pro) + AMP + diphosphate. Functionally, catalyzes the attachment of proline to tRNA(Pro) in a two-step reaction: proline is first activated by ATP to form Pro-AMP and then transferred to the acceptor end of tRNA(Pro). As ProRS can inadvertently accommodate and process non-cognate amino acids such as alanine and cysteine, to avoid such errors it has two additional distinct editing activities against alanine. One activity is designated as 'pretransfer' editing and involves the tRNA(Pro)-independent hydrolysis of activated Ala-AMP. The other activity is designated 'posttransfer' editing and involves deacylation of mischarged Ala-tRNA(Pro). The misacylated Cys-tRNA(Pro) is not edited by ProRS. This chain is Proline--tRNA ligase, found in Vibrio atlanticus (strain LGP32) (Vibrio splendidus (strain Mel32)).